Here is a 177-residue protein sequence, read N- to C-terminus: Inorganic pyrophosphatase (177 aa).

Residues Lys-29, Arg-43, and Tyr-55 each coordinate substrate. Mg(2+) contacts are provided by Asp-65, Asp-70, and Asp-102. Tyr-141 provides a ligand contact to substrate.

The protein belongs to the PPase family. Homohexamer. The cofactor is Mg(2+).

It is found in the cytoplasm. The enzyme catalyses diphosphate + H2O = 2 phosphate + H(+). Functionally, catalyzes the hydrolysis of inorganic pyrophosphate (PPi) forming two phosphate ions. The polypeptide is Inorganic pyrophosphatase (Aquifex pyrophilus).